Here is a 330-residue protein sequence, read N- to C-terminus: Phosphate acyltransferase (330 aa).

Belongs to the PlsX family. As to quaternary structure, homodimer. Probably interacts with PlsY.

It localises to the cytoplasm. The enzyme catalyses a fatty acyl-[ACP] + phosphate = an acyl phosphate + holo-[ACP]. It participates in lipid metabolism; phospholipid metabolism. Functionally, catalyzes the reversible formation of acyl-phosphate (acyl-PO(4)) from acyl-[acyl-carrier-protein] (acyl-ACP). This enzyme utilizes acyl-ACP as fatty acyl donor, but not acyl-CoA. This Carboxydothermus hydrogenoformans (strain ATCC BAA-161 / DSM 6008 / Z-2901) protein is Phosphate acyltransferase.